Reading from the N-terminus, the 501-residue chain is Actin nucleation-promoting factor WASL (501 aa).

An N-acetylserine modification is found at serine 2. One can recognise a WH1 domain in the interval leucine 31–arginine 138. Disordered stretches follow at residues leucine 135–threonine 158 and serine 180–threonine 202. The span at lysine 183–leucine 195 shows a compositional bias: basic residues. The CRIB domain maps to isoleucine 200–glycine 213. Serine 239 is modified (phosphoserine; by TNK2). Tyrosine 253 carries the phosphotyrosine; by FAK1 and TNK2 modification. 2 disordered regions span residues glutamate 263–leucine 405 and glutamine 442–aspartate 501. 2 stretches are compositionally biased toward pro residues: residues alanine 273–leucine 361 and alanine 368–leucine 387. At arginine 304 the chain carries Omega-N-methylarginine. WH2 domains lie at asparagine 401–valine 418 and glycine 429–valine 446. Polar residues predominate over residues glutamine 442 to threonine 453. Phosphoserine occurs at positions 480 and 481. The segment covering aspartate 482–aspartate 501 has biased composition (acidic residues).

Binds actin and the Arp2/3 complex. Interacts with CDC42. Interacts with FCHSD1. Interacts with FCHSD2. Binds to SH3 domains of GRB2. Interacts with the C-terminal SH3 domain of DNMBP. Interacts with SNX9. Interacts with the WW domains of PRPF40A/FBP11. Interacts with PTK2/FAK1. Interacts with PACSIN1, PACSIN2 and PACSIN3. Interacts with NOSTRIN. Binds to TNK2. Interacts with SNX33. Interacts with NONO (via second RRM domain); the interaction is direct. Component of a multiprotein complex with NONO and SFPQ; associates with the complex via direct interaction with NONO. Post-translationally, phosphorylation at Ser-239, Tyr-253, Ser-480 and Ser-481 enhances actin polymerization activity.

The protein resides in the cytoplasm. It is found in the cytoskeleton. The protein localises to the nucleus. Functionally, regulates actin polymerization by stimulating the actin-nucleating activity of the Arp2/3 complex. Involved in various processes, such as mitosis and cytokinesis, via its role in the regulation of actin polymerization. Together with CDC42, involved in the extension and maintenance of the formation of thin, actin-rich surface projections called filopodia. In addition to its role in the cytoplasm, also plays a role in the nucleus by regulating gene transcription, probably by promoting nuclear actin polymerization. Binds to HSF1/HSTF1 and forms a complex on heat shock promoter elements (HSE) that negatively regulates HSP90 expression. Plays a role in dendrite spine morphogenesis. The sequence is that of Actin nucleation-promoting factor WASL (Wasl) from Rattus norvegicus (Rat).